An 82-amino-acid chain; its full sequence is Cell division topological specificity factor (82 aa).

The protein belongs to the MinE family.

Its function is as follows. Prevents the cell division inhibition by proteins MinC and MinD at internal division sites while permitting inhibition at polar sites. This ensures cell division at the proper site by restricting the formation of a division septum at the midpoint of the long axis of the cell. This chain is Cell division topological specificity factor, found in Hahella chejuensis (strain KCTC 2396).